A 344-amino-acid polypeptide reads, in one-letter code: MTLTTEDFNYDLPHELIAQTPIKERDESRLLVLDHETGAMEDKHFYDIIDQLNPGDAVVMNNSRVMPARIYGIKDKTGGHFEVLLLHNIEGDRWETLVKPAKRAKTGTKIIFGDGALTATVTKELEHGGREIVFDYDGIFMEVLEKLGEMPLPPYIKEKLDDPERYQTVYSKEPGSAAAPTAGLHWTKELLEKVEQKGIKLVYLTLHVGLGTFRPVDEDNIEDHKMHSEFYQLSEESAAALNEVKKQGGRIVATGTTSIRTLETIGSKFNGEIKADSGWTDIFIKPGYEWKVVDAFITNFHLPKSTLVMLVAAFTGRENILNAYQHAIEEKYRFFSFGDAMFIK.

It belongs to the QueA family. As to quaternary structure, monomer.

The protein localises to the cytoplasm. It carries out the reaction 7-aminomethyl-7-carbaguanosine(34) in tRNA + S-adenosyl-L-methionine = epoxyqueuosine(34) in tRNA + adenine + L-methionine + 2 H(+). It participates in tRNA modification; tRNA-queuosine biosynthesis. Transfers and isomerizes the ribose moiety from AdoMet to the 7-aminomethyl group of 7-deazaguanine (preQ1-tRNA) to give epoxyqueuosine (oQ-tRNA). This is S-adenosylmethionine:tRNA ribosyltransferase-isomerase from Pediococcus pentosaceus (strain ATCC 25745 / CCUG 21536 / LMG 10740 / 183-1w).